The primary structure comprises 555 residues: WRKY transcription factor WRKY24 (555 aa).

Disordered stretches follow at residues Gly38–Phe65 and Gln132–Pro248. Residues Pro51–Ser61 show a composition bias toward pro residues. A compositionally biased stretch (low complexity) spans Gln163 to Ala194. Positions Ser214–Pro278 form a DNA-binding region, WRKY 1. A Nuclear localization signal motif is present at residues Lys253–Ser259. The disordered stretch occupies residues Lys270–Thr367. Polar residues-rich tracts occupy residues Lys277–Gln294 and Thr310–Ser320. Over residues Asp347–Asp356 the composition is skewed to basic and acidic residues. The segment at residues Ser379–Pro444 is a DNA-binding region (WRKY 2). A transcription repression of gibberellic acid (GA)-induced promoters region spans residues His466–Tyr555. 2 disordered regions span residues Asn471–Pro498 and Gly513–Tyr555.

Belongs to the WRKY group II-a family. As to expression, expressed in aleurone cells. Mostly expressed in aleurone layers and leaves, and, to a lower extent, in roots, panicles and embryos.

The protein localises to the nucleus. In terms of biological role, transcription repressor. Interacts specifically with the W box (5'-(T)TGAC[CT]-3'), a frequently occurring elicitor-responsive cis-acting element. Negative regulator of both gibberellic acid (GA) and abscisic acid (ABA) signaling in aleurone cells, probably by interfering with GAM1, via the specific repression of GA- and ABA-induced promoters. The sequence is that of WRKY transcription factor WRKY24 from Oryza sativa subsp. indica (Rice).